A 229-amino-acid chain; its full sequence is Putative ankyrin repeat protein L148 (229 aa).

4 ANK repeats span residues 70–95 (ILDY…PDNY), 96–126 (IGTE…DLRI), 127–156 (NNDY…NCQA), and 157–186 (YNNA…SVAA).

In Acanthamoeba polyphaga (Amoeba), this protein is Putative ankyrin repeat protein L148.